The chain runs to 320 residues: Probable L-ascorbate peroxidase 5, chloroplastic (320 aa).

The N-terminal 42 residues, 1 to 42, are a transit peptide targeting the chloroplast; sequence MAVVHRILRRGLSAASPLPSLRGLLLVSPQELGRRPASSSSS. His80 acts as the Proton acceptor in catalysis. His209 provides a ligand contact to heme b. Thr210 lines the K(+) pocket. Residues 213–241 form a disordered region; the sequence is RARPERSGWGKPETKYTENGPGAPGGQSW. Basic and acidic residues predominate over residues 214–228; that stretch reads ARPERSGWGKPETKY. K(+) is bound by residues Thr242 and Asp249.

It belongs to the peroxidase family. Ascorbate peroxidase subfamily. Heme b serves as cofactor. In terms of tissue distribution, expressed in leaves, stems and flowers.

It localises to the plastid. The protein resides in the chloroplast stroma. It carries out the reaction L-ascorbate + H2O2 = L-dehydroascorbate + 2 H2O. In terms of biological role, plays a key role in hydrogen peroxide removal. In Oryza sativa subsp. japonica (Rice), this protein is Probable L-ascorbate peroxidase 5, chloroplastic.